Consider the following 420-residue polypeptide: D-tagatose-1,6-bisphosphate aldolase subunit GatZ (420 aa).

This sequence belongs to the GatZ/KbaZ family. GatZ subfamily. In terms of assembly, forms a complex with GatY.

It functions in the pathway carbohydrate metabolism; D-tagatose 6-phosphate degradation; D-glyceraldehyde 3-phosphate and glycerone phosphate from D-tagatose 6-phosphate: step 2/2. Functionally, component of the tagatose-1,6-bisphosphate aldolase GatYZ that is required for full activity and stability of the Y subunit. Could have a chaperone-like function for the proper and stable folding of GatY. When expressed alone, GatZ does not show any aldolase activity. Is involved in the catabolism of galactitol. This is D-tagatose-1,6-bisphosphate aldolase subunit GatZ from Escherichia coli O139:H28 (strain E24377A / ETEC).